The sequence spans 425 residues: Enolase (425 aa).

Gln-162 serves as a coordination point for (2R)-2-phosphoglycerate. Glu-204 functions as the Proton donor in the catalytic mechanism. The Mg(2+) site is built by Asp-241, Glu-282, and Asp-309. (2R)-2-phosphoglycerate contacts are provided by Lys-334, Arg-363, Ser-364, and Lys-385. Lys-334 (proton acceptor) is an active-site residue.

Belongs to the enolase family. It depends on Mg(2+) as a cofactor.

It localises to the cytoplasm. It is found in the secreted. Its subcellular location is the cell surface. The enzyme catalyses (2R)-2-phosphoglycerate = phosphoenolpyruvate + H2O. It participates in carbohydrate degradation; glycolysis; pyruvate from D-glyceraldehyde 3-phosphate: step 4/5. Functionally, catalyzes the reversible conversion of 2-phosphoglycerate (2-PG) into phosphoenolpyruvate (PEP). It is essential for the degradation of carbohydrates via glycolysis. The chain is Enolase from Corynebacterium urealyticum (strain ATCC 43042 / DSM 7109).